We begin with the raw amino-acid sequence, 165 residues long: Nucleotide-binding protein P9301_05061 (165 aa).

Belongs to the YajQ family.

Functionally, nucleotide-binding protein. The chain is Nucleotide-binding protein P9301_05061 from Prochlorococcus marinus (strain MIT 9301).